A 448-amino-acid polypeptide reads, in one-letter code: Inositol polyphosphate 5-phosphatase K (448 aa).

Residues 16 to 318 form a catalytic region; sequence IHVVTWNVAS…SDHKPVSGTF (303 aa). A required for interaction with GPR78 and PAK1 region spans residues 318-448; it reads FDLELKPLVS…DPLGEAQPQI (131 aa). Residues 321-448 form a required for ruffle localization region; sequence ELKPLVSAPL…DPLGEAQPQI (128 aa).

It belongs to the inositol 1,4,5-trisphosphate 5-phosphatase type II family. Interacts with GPR78; necessary for INPP5K localization at the endoplasmic reticulum. Interacts with PAK1; competes with GPR78. As to expression, ubiquitously expressed with highest levels in skeletal muscle, heart and kidney.

The protein resides in the endoplasmic reticulum. Its subcellular location is the cytoplasm. It catalyses the reaction 1D-myo-inositol 1,4,5-trisphosphate + H2O = 1D-myo-inositol 1,4-bisphosphate + phosphate. It carries out the reaction 1D-myo-inositol 1,3,4,5-tetrakisphosphate + H2O = 1D-myo-inositol 1,3,4-trisphosphate + phosphate. The catalysed reaction is a 1,2-diacyl-sn-glycero-3-phospho-(1D-myo-inositol-4,5-bisphosphate) + H2O = a 1,2-diacyl-sn-glycero-3-phospho-(1D-myo-inositol 4-phosphate) + phosphate. The enzyme catalyses a 1,2-diacyl-sn-glycero-3-phospho-(1D-myo-inositol-3,4,5-trisphosphate) + H2O = a 1,2-diacyl-sn-glycero-3-phospho-(1D-myo-inositol-3,4-bisphosphate) + phosphate. It catalyses the reaction 1,2-dioctanoyl-sn-glycero-3-phospho-(1D-myo-inositol-3,4,5-trisphosphate) + H2O = 1,2-dioctanoyl-sn-glycero-3-phospho-(1D-myo-inositol-3,4-bisphosphate) + phosphate. Inositol 5-phosphatase which acts on inositol 1,4,5-trisphosphate, inositol 1,3,4,5-tetrakisphosphate, phosphatidylinositol 4,5-bisphosphate and phosphatidylinositol 3,4,5-trisphosphate. Has 6-fold higher affinity for phosphatidylinositol 4,5-bisphosphate than for inositol 1,4,5-trisphosphate. Negatively regulates assembly of the actin cytoskeleton. Controls insulin-dependent glucose uptake among inositol 3,4,5-trisphosphate phosphatases; therefore, is the specific regulator for insulin signaling in skeletal muscle. The protein is Inositol polyphosphate 5-phosphatase K of Homo sapiens (Human).